Here is a 400-residue protein sequence, read N- to C-terminus: MAIKLEIKNLYKIFGEHPQRAFKYIEQGLSKEQILEKTGLSLGVKDASLAIEEGEIFVIMGLSGSGKSTMVRLLNRLIEPTRGQVLIDGVDIAKISDAELREVRRKKIAMVFQSFALMPHMTVLDNTAFGMELAGINAEERREKALDALRQVGLENYAHSYPDELSGGMRQRVGLARALAINPDILLMDEAFSALDPLIRTEMQDELVKLQAKHQRTIVFISHDLDEAMRIGDRIAIMQNGEVVQVGTPDEILNNPANDYVRTFFRGVDISQVFSAKDIARRTPNGLIRKTPGFGPRSALKLLQDEDREYGYVIERGNKFVGAVSIDSLKTALTQQQGLDAALIDAPLAVDAQTPLSELLSHVGQAPCAVPVVDEDQQYVGIISKGMLLRALDREGVNNG.

In terms of domain architecture, ABC transporter spans 29–265; that stretch reads LSKEQILEKT…PANDYVRTFF (237 aa). 61 to 68 lines the ATP pocket; that stretch reads GLSGSGKS. CBS domains are found at residues 282–341 and 343–400; these read RTPN…GLDA and LIDA…VNNG.

This sequence belongs to the ABC transporter superfamily. As to quaternary structure, the complex is composed of two ATP-binding proteins (ProV), two transmembrane proteins (ProW) and a solute-binding protein (ProX).

The protein resides in the cell inner membrane. Its function is as follows. Part of the ProU ABC transporter complex involved in glycine betaine and proline betaine uptake. Probably responsible for energy coupling to the transport system. The sequence is that of Glycine betaine/proline betaine transport system ATP-binding protein ProV from Escherichia coli (strain K12).